A 352-amino-acid polypeptide reads, in one-letter code: 4-hydroxybenzaldehyde synthase, chloroplastic (352 aa).

A glycan (N-linked (GlcNAc...) asparagine) is linked at Asn-122. 2 disulfides stabilise this stretch: Cys-159–Cys-199 and Cys-190–Cys-231. A glycan (N-linked (GlcNAc...) asparagine) is linked at Asn-247. Cysteines 289 and 339 form a disulfide. Catalysis depends on residues His-298 and Asn-318.

It belongs to the peptidase C1 family. Forms homodimers, homotrimers and homotetramers. Mainly expressed in pods, but also present in stems, roots, leaves and embryos (at protein level).

Its subcellular location is the plastid. The protein resides in the chloroplast. The enzyme catalyses (E)-4-coumarate + H2O = 4-hydroxybenzaldehyde + acetate. It functions in the pathway aromatic compound metabolism; phenylpropanoid biosynthesis. Inhibited by ascorbate. Its function is as follows. Involved in the biosynthesis of vanillin (4-hydroxy-3-methoxy-benzaldehyde) and derivative natural products, key components of vanilla pods flavor. Catalyzes the conversion of (E)-4-coumarate to 4-hydroxybenzaldehyde, a vanillin precursor. Mediates the conversion of ferulic acid to 3-methoxy-4-hydroxybenzaldehyde with a very low efficiency. Cannot use cinnamic, caffeic, sinapic and o-coumaric acids as substrates. The chain is 4-hydroxybenzaldehyde synthase, chloroplastic from Vanilla planifolia (Vanilla).